The following is a 31-amino-acid chain: Bacteriocin leucocin-B (31 aa).

The protein resides in the secreted. Its function is as follows. Inhibits a wide spectrum of lactic acid bacteria. In Leuconostoc mesenteroides, this protein is Bacteriocin leucocin-B.